A 49-amino-acid chain; its full sequence is Single-stranded DNA-binding protein (49 aa).

As to quaternary structure, homodimer in the absence of DNA, monomer when binding DNA.

Functionally, binds preferentially to single-stranded DNA and therefore, destabilizes double-stranded DNA. It is involved in DNA replication, repair and recombination. Binds ss-DNA as the replication fork advances and stimulates the replisome processivity and accuracy. In Enterobacteria phage RB9 (Bacteriophage RB9), this protein is Single-stranded DNA-binding protein (32).